Consider the following 745-residue polypeptide: 5-methyltetrahydropteroyltriglutamate--homocysteine methyltransferase (745 aa).

5-methyltetrahydropteroyltri-L-glutamate-binding positions include 19 to 22 (RELK) and lysine 119. Residues 418–420 (IGS) and glutamate 471 each bind L-homocysteine. L-methionine contacts are provided by residues 418 to 420 (IGS) and glutamate 471. Residues 502–503 (RC) and tryptophan 548 each bind 5-methyltetrahydropteroyltri-L-glutamate. L-homocysteine is bound at residue aspartate 586. Aspartate 586 contacts L-methionine. Glutamate 592 serves as a coordination point for 5-methyltetrahydropteroyltri-L-glutamate. Histidine 628, cysteine 630, and glutamate 652 together coordinate Zn(2+). The active-site Proton donor is histidine 681. Cysteine 713 serves as a coordination point for Zn(2+).

This sequence belongs to the vitamin-B12 independent methionine synthase family. Zn(2+) serves as cofactor.

It carries out the reaction 5-methyltetrahydropteroyltri-L-glutamate + L-homocysteine = tetrahydropteroyltri-L-glutamate + L-methionine. It participates in amino-acid biosynthesis; L-methionine biosynthesis via de novo pathway; L-methionine from L-homocysteine (MetE route): step 1/1. Functionally, catalyzes the transfer of a methyl group from 5-methyltetrahydrofolate to homocysteine resulting in methionine formation. This Corynebacterium glutamicum (strain R) protein is 5-methyltetrahydropteroyltriglutamate--homocysteine methyltransferase.